The following is a 1494-amino-acid chain: Methyl-CpG-binding domain protein 5 (1494 aa).

Residues 11–81 (DKEGGLPAIQ…KVFNFDPGAA (71 aa)) form the MBD domain. The tract at residues 57-68 (DGTCKCGLECPL) is required for interaction with ASXL1/2/3. 8 disordered regions span residues 123-152 (LVLT…RNKS), 200-274 (RQRL…TPLS), 329-350 (HHKP…QKKP), 450-522 (IGRI…KDIP), 594-641 (LAGN…QSGR), 809-848 (PNPP…SSSI), 1154-1173 (HDGR…LDHG), and 1345-1375 (VNGC…SNEL). Pro residues predominate over residues 333–343 (PQGPPPPPPPS). Composition is skewed to low complexity over residues 499 to 511 (SPRP…PSTK) and 594 to 612 (LAGN…AGSG). 2 stretches are compositionally biased toward polar residues: residues 614-624 (TEGHSTLNTMF) and 813-835 (QSRI…YNQT). Low complexity predominate over residues 836 to 848 (SSEAGGSGPSSSI). The PWWP domain maps to 1385–1409 (VGDLVWGQIKGLTSWPGKLVREDDV). Residues 1468-1494 (MSGTVHQIPQGDRQMRPPKPKRRKISR) form a disordered region. Basic residues predominate over residues 1483–1494 (RPPKPKRRKISR).

Core component of the polycomb repressive deubiquitinase (PR-DUB) complex, at least composed of BAP1, one of ASXL1, ASXL2 or (probably) ASXL3, and one of MBD5 or MBD6. Distinct combinations of ASXL and MBD proteins may preferentially bind specific histone modification marks. The PR-DUB core associates with a number of accessory proteins, including FOXK1, FOXK2, KDM1B, HCFC1 and OGT; KDM1B specifically associates with ASXL2 PR-DUB complexes. Interacts (via MBD domain) with ASXL1, ASXL2 and ASXL3 (via PHD domain); the interaction is probably direct, mediates association with other PR-DUB complex core components. As to expression, detected in heart, placenta, liver, skeletal muscle, kidney and pancreas.

It localises to the nucleus. The protein resides in the chromosome. Non-catalytic component of the polycomb repressive deubiquitinase (PR-DUB) complex, a complex that specifically mediates deubiquitination of histone H2A monoubiquitinated at 'Lys-120' (H2AK119ub1). Important for stability of PR-DUB components and stimulating its ubiquitinase activity. As part of the PR-DUB complex, associates with chromatin enriched in histone marks H3K4me1, H3K4me3, and H3K27Ac, but not in H3K27me3. The PR-DUB complex is an epigenetic regulator of gene expression, including genes involved in cell growth and survivability. MBD5 and MBD6 containing complexes associate with distinct chromatin regions enriched in genes involved in different pathways. Heterochromatin recruitment is not mediated by DNA methylation. The PR-DUB complex is an epigenetic regulator of gene expression, including genes involved in development, cell communication, signaling, cell proliferation and cell viability. This Homo sapiens (Human) protein is Methyl-CpG-binding domain protein 5 (MBD5).